The sequence spans 1008 residues: ATP-dependent zinc metalloprotease FTSH 12, chloroplastic (1008 aa).

Residues 1 to 49 (MEIAISYKPNPLISSSTQLLKRSKSFGLVRFPAKYGLGATRKKQLFRVY) constitute a chloroplast transit peptide. Transmembrane regions (helical) follow at residues 154–174 (AALF…YVAI) and 427–447 (IHYF…LWFI). 533-540 (GPPGTGKT) contributes to the ATP binding site. Histidine 769 lines the Zn(2+) pocket. Glutamate 770 is an active-site residue. Residues histidine 773 and aspartate 849 each coordinate Zn(2+).

It in the N-terminal section; belongs to the AAA ATPase family. The protein in the C-terminal section; belongs to the peptidase M41 family. Zn(2+) is required as a cofactor.

The protein resides in the plastid. Its subcellular location is the chloroplast thylakoid membrane. Functionally, probable ATP-dependent zinc metallopeptidase. The protein is ATP-dependent zinc metalloprotease FTSH 12, chloroplastic (FTSH12) of Arabidopsis thaliana (Mouse-ear cress).